The following is a 237-amino-acid chain: MRHIFQRLLPRRLWLAGLPCLALLGCVQNHNKPAIDTPAEEKIPVYQLADYLSTECSDIWALQGKSTETNPLYWLRAMDCADRLMPAQSRQQARQYDDGSWQNTFKQGILLADAKITPYERRQLVARIEALSTEIPAQVRPLYQLWRDGQALQLQLAEERQRYSKLQQSSDSELDTLRQQHHVLQQQLELTTRKLENLTDIERQLSTRKPAGNFSPDTPHESEKPAPSTHEVTPDEP.

Residues 1 to 25 constitute a signal peptide (tat-type signal); it reads MRHIFQRLLPRRLWLAGLPCLALLG. The tract at residues 201-237 is disordered; sequence IERQLSTRKPAGNFSPDTPHESEKPAPSTHEVTPDEP.

In terms of processing, exported by the Tat system. The position of the signal peptide cleavage has not been experimentally proven. Can also be exported by the Sec system.

This is an uncharacterized protein from Escherichia coli (strain K12).